Reading from the N-terminus, the 361-residue chain is Serine/threonine-protein kinase SRK2I (361 aa).

One can recognise a Protein kinase domain in the interval tyrosine 22–phenylalanine 278. Residues isoleucine 28–alanine 36 and lysine 51 each bind ATP. The active-site Proton acceptor is the aspartate 141.

The protein belongs to the protein kinase superfamily. Ser/Thr protein kinase family. Interacts with ABI1. Interacts with I-2 and TOPP1. Interacts with FREE1 (via C-terminus). Autophosphorylated in vitro. As to expression, expressed at low levels in seeds, seedlings, roots (especially in tips), stems, leaves, shoots, flowers and siliques.

The enzyme catalyses L-seryl-[protein] + ATP = O-phospho-L-seryl-[protein] + ADP + H(+). It catalyses the reaction L-threonyl-[protein] + ATP = O-phospho-L-threonyl-[protein] + ADP + H(+). With respect to regulation, activated by autophosphorylation of its activation loop. Its function is as follows. Together with SRK2D, key component and activator of the abscisic acid (ABA) signaling pathway that regulates numerous ABA responses, such as seed germination, Pro accumulation, root growth inhibition, dormancy and seedling growth, and, to a lesser extent, stomatal closure. In response to ABA, phosphorylates the ESCRT-I complex component FREE1, which is required for ABA-induced FREE1 nuclear import. In Arabidopsis thaliana (Mouse-ear cress), this protein is Serine/threonine-protein kinase SRK2I (SRK2I).